The following is a 691-amino-acid chain: Replication and transcription activator (691 aa).

2 O-linked (GlcNAc) threonine; by host glycosylation sites follow: T366 and T367. Disordered regions lie at residues 482-582 (EASG…SLPP) and 626-677 (LDTP…QESG). Over residues 504-513 (TAAATAAEAT) the composition is skewed to low complexity. Positions 515–531 (PKRKQRSKERSSKKRKA) are enriched in basic residues. Low complexity predominate over residues 539–556 (TTPSTTTPGTSLGSITTP). The span at 655–677 (EYTQLQPVRATSATPANEVQESG) shows a compositional bias: polar residues.

Belongs to the herpesviridae TAF50 family. As to quaternary structure, homotetramer. Interacts with KTA/ORF57. Interacts with host PARP1; this interaction negatively regulates RTA/ORF50 transactivation activity. Interacts with host SMC5 and SMC6; these interactions remove the repressive chromatin structure to allow viral reactivation. Interacts with host POU2F1; this interaction enhances RTA/ORF50-mediated transactivation of several viral promoters including K-bZIP promoter.

It localises to the host nucleus. It carries out the reaction S-ubiquitinyl-[E2 ubiquitin-conjugating enzyme]-L-cysteine + [acceptor protein]-L-lysine = [E2 ubiquitin-conjugating enzyme]-L-cysteine + N(6)-ubiquitinyl-[acceptor protein]-L-lysine.. In terms of biological role, transcriptional transactivator that is necessary and sufficient for reactivation of the virus from latency. Acts post-transcriptionally and transcriptionally to regulate viral lytic gene expression and synergistically with ORF57 activates certain early and late viral promoters including its own promoter. Autostimulation on its promoter is mediated by the formation of a ternary complex between ORF50 and the cellular components HGMB1 and POU2F1. Also possesses a bimodal activity in targeting proteins for degradation through using its own E3 ligase activity or by stabilizing and chaperoning host E3 ligases. These activities help to subvert the host innate and adaptive immune responses while also modulating the host transcriptome and protein landscape to promote virus production. For instance, targets the host SMC5/6 complex for ubiquitination and subsequent degradation through the ubiquitin-proteasome during reactivation while during latency, host SMC5/6 complex binds to the viral episome and condenses viral chromatin, creating a repressive chromatin structure to silence genome transcription. Hijacks the cellular E3 ligase complex RNF20/40 to increase the level of transcriptionally active RNA polymerase II on viral gene promoters thereby facilitating lytic gene expression. Acts as a SUMO-targeting ubiquitin ligase and affects general sumoylation of cellular proteins. Promotes the polyubiquitination and subsequent degradation of host MYD88 and thereby inhibits MYD88-mediated TLR4 signaling. Induces the degradation of vFLIP/ORF71 together with cellular ubiquitin ligase ITCH to prevent vFLIP-induced NF-kappa-B signaling. In Homo sapiens (Human), this protein is Replication and transcription activator (ORF50).